A 336-amino-acid polypeptide reads, in one-letter code: uncharacterized protein (336 aa).

2 disordered regions span residues 29–93 (GGVS…HSGA) and 116–147 (LQER…GVTG). 2 stretches are compositionally biased toward polar residues: residues 70 to 82 (SGGS…TSTA) and 125 to 141 (PWRT…SQPH).

This is an uncharacterized protein from Bos taurus (Bovine).